Here is a 214-residue protein sequence, read N- to C-terminus: Urease accessory protein UreG (214 aa).

The interval 1 to 20 is disordered; sequence MSQLHAVPGRTKKLPPLRVG. 23-30 is a GTP binding site; sequence GPVGSGKT.

This sequence belongs to the SIMIBI class G3E GTPase family. UreG subfamily. In terms of assembly, homodimer. UreD, UreF and UreG form a complex that acts as a GTP-hydrolysis-dependent molecular chaperone, activating the urease apoprotein by helping to assemble the nickel containing metallocenter of UreC. The UreE protein probably delivers the nickel.

It localises to the cytoplasm. Its function is as follows. Facilitates the functional incorporation of the urease nickel metallocenter. This process requires GTP hydrolysis, probably effectuated by UreG. This Leptothrix cholodnii (strain ATCC 51168 / LMG 8142 / SP-6) (Leptothrix discophora (strain SP-6)) protein is Urease accessory protein UreG.